We begin with the raw amino-acid sequence, 108 residues long: DNA-binding protein HBbu (108 aa).

This sequence belongs to the bacterial histone-like protein family.

Functionally, histone-like DNA-binding protein which is capable of wrapping DNA to stabilize it, and thus to prevent its denaturation under extreme environmental conditions. The polypeptide is DNA-binding protein HBbu (hbb) (Borrelia andersonii (Borreliella andersonii)).